Reading from the N-terminus, the 356-residue chain is Tyrosine recombinase XerS (356 aa).

The 106-residue stretch at 16–121 (IMPWYVLDYY…ALSSLYKYLT (106 aa)) folds into the Core-binding (CB) domain. The region spanning 169–354 (AFLDYVDKEY…VNDEQKNALD (186 aa)) is the Tyr recombinase domain. Residues Arg-210, Lys-234, His-306, Arg-309, and His-332 contribute to the active site. Tyr-341 functions as the O-(3'-phospho-DNA)-tyrosine intermediate in the catalytic mechanism.

It belongs to the 'phage' integrase family. XerS subfamily.

The protein resides in the cytoplasm. With respect to regulation, ftsK is required for recombination. In terms of biological role, site-specific tyrosine recombinase, which acts by catalyzing the cutting and rejoining of the recombining DNA molecules. Essential to convert dimers of the bacterial chromosome into monomers to permit their segregation at cell division. The polypeptide is Tyrosine recombinase XerS (Streptococcus pyogenes serotype M5 (strain Manfredo)).